The chain runs to 417 residues: Tumor necrosis factor receptor superfamily member 25 (417 aa).

An N-terminal signal peptide occupies residues 1–24; sequence MEQRPRGCAAVAAALLLVLLGARA. Over 25 to 199 the chain is Extracellular; that stretch reads QGGTRSPRCD…RCAAVCGWRQ (175 aa). TNFR-Cys repeat units lie at residues 34-71, 72-115, 116-163, and 164-192; these read DCAG…STCL, VCPQ…DTRC, GCKP…TDCG, and TCLP…ERCA. Cystine bridges form between C35–C47, C48–C61, C51–C70, C73–C89, C92–C107, C95–C115, C117–C130, C138–C155, C141–C162, C165–C176, C179–C191, and C187–C195. N67 carries N-linked (GlcNAc...) asparagine glycosylation. N106 is a glycosylation site (N-linked (GlcNAc...) asparagine). Residues 200–220 traverse the membrane as a helical segment; that stretch reads MFWVQVLLAGLVVPLLLGATL. The Cytoplasmic portion of the chain corresponds to 221 to 417; it reads TYTYRHCWPH…DLRSRLQRGP (197 aa). Residues 332–413 enclose the Death domain; that stretch reads GPQLYDVMDA…GCVEDLRSRL (82 aa). R352 carries (Microbial infection) N-beta-linked (GlcNAc) arginine glycosylation.

Homodimer. Interacts strongly via the death domains with TNFRSF1 and TRADD to activate at least two distinct signaling cascades, apoptosis and NF-kappa-B signaling. Interacts with BAG4. Post-translationally, (Microbial infection) Glycosylated at Arg-352 by enteropathogenic E.coli protein NleB1. In terms of processing, glycosylated. As to expression, abundantly expressed in thymocytes and lymphocytes. Detected in lymphocyte-rich tissues such as thymus, colon, intestine, and spleen. Also found in the prostate.

It localises to the cell membrane. The protein resides in the secreted. Receptor for TNFSF12/APO3L/TWEAK. Interacts directly with the adapter TRADD. Mediates activation of NF-kappa-B and induces apoptosis. May play a role in regulating lymphocyte homeostasis. The sequence is that of Tumor necrosis factor receptor superfamily member 25 (TNFRSF25) from Homo sapiens (Human).